The primary structure comprises 339 residues: Ribosomal RNA small subunit methyltransferase C (339 aa).

The protein belongs to the methyltransferase superfamily. RsmC family. Monomer.

It localises to the cytoplasm. It carries out the reaction guanosine(1207) in 16S rRNA + S-adenosyl-L-methionine = N(2)-methylguanosine(1207) in 16S rRNA + S-adenosyl-L-homocysteine + H(+). Functionally, specifically methylates the guanine in position 1207 of 16S rRNA in the 30S particle. This chain is Ribosomal RNA small subunit methyltransferase C, found in Aliivibrio salmonicida (strain LFI1238) (Vibrio salmonicida (strain LFI1238)).